Reading from the N-terminus, the 854-residue chain is Fibronectin-binding protein PlpA (854 aa).

Residues 1-24 (MDNNQNNFNQPGQQGFDQYQQQSG) show a composition bias toward low complexity. The tract at residues 1-33 (MDNNQNNFNQPGQQGFDQYQQQSGALVSYGYDA) is disordered. The interval 91–109 (QYNQQQNQGYEQQYDEYGN) is fibronectin-binding. 4 disordered regions span residues 247–327 (YEQE…LEAP), 411–434 (SSNN…EDSN), 743–766 (TINP…QLPP), and 835–854 (IQPS…YNNR). Basic and acidic residues predominate over residues 258–267 (EPAHEQDLRE). Polar residues-rich tracts occupy residues 311–320 (TVNQPDQTPI) and 411–428 (SSNN…TSNE). Residues 384–622 (NLEEIQKVKL…SSFQKALSEV (239 aa)) are a coiled coil. Pro residues predominate over residues 746–764 (PPQPQPQALPQPHPQPQQL).

It localises to the cell membrane. Functionally, binds immobilized fibronectin, specifically the gelatin/heparin-binding domain. The polypeptide is Fibronectin-binding protein PlpA (plpA) (Mycoplasmoides gallisepticum (strain R(low / passage 15 / clone 2)) (Mycoplasma gallisepticum)).